A 587-amino-acid polypeptide reads, in one-letter code: Barrierpepsin (587 aa).

The first 24 residues, 1-24 (MSAINHLCLKLILASFAIINTITA), serve as a signal peptide directing secretion. The Peptidase A1 domain occupies 45–393 (YATTLDIGTP…DLDNYKISLA (349 aa)). Asp-63 is a catalytic residue. Residues Asn-84, Asn-90, and Asn-268 are each glycosylated (N-linked (GlcNAc...) asparagine). Asp-287 is an active-site residue. A glycan (N-linked (GlcNAc...) asparagine) is linked at Asn-308. Residues Cys-322 and Cys-358 are joined by a disulfide bond. N-linked (GlcNAc...) asparagine glycans are attached at residues Asn-366, Asn-398, Asn-468, Asn-503, and Asn-551. The segment at 466 to 505 (SRNCSTKMPGTRSTTVLSKPTQNSAMHQSTGAVTQTSNET) is disordered.

Belongs to the peptidase A1 family.

The protein resides in the secreted. The enzyme catalyses Selective cleavage of 6-Leu-|-Lys-7 bond in the pheromone alpha-mating factor.. Functionally, this protein called 'barrier activity' is excreted by yeast cells mating type a. It is probably a protease that cleaves alpha-factor and thus acts as an antagonist of this mating pheromone and establishes optimal pheromone concentration for conjugation. This Saccharomyces cerevisiae (strain ATCC 204508 / S288c) (Baker's yeast) protein is Barrierpepsin (BAR1).